A 273-amino-acid polypeptide reads, in one-letter code: F-actin-capping protein subunit alpha (273 aa).

This sequence belongs to the F-actin-capping protein alpha subunit family. In terms of assembly, heterodimer of an alpha and a beta subunit.

The protein localises to the cytoplasm. Its subcellular location is the cytoskeleton. Functionally, F-actin-capping proteins bind in a Ca(2+)-independent manner to the fast growing ends of actin filaments (barbed end) thereby blocking the exchange of subunits at these ends. Unlike other capping proteins (such as gelsolin and severin), these proteins do not sever actin filaments. This is F-actin-capping protein subunit alpha (cap1) from Emericella nidulans (strain FGSC A4 / ATCC 38163 / CBS 112.46 / NRRL 194 / M139) (Aspergillus nidulans).